The following is a 535-amino-acid chain: CTP synthase (535 aa).

The interval 1-267 is amidoligase domain; the sequence is MTKFIFVTGG…DDIVIKKLGL (267 aa). A CTP-binding site is contributed by S13. S13 lines the UTP pocket. 14 to 19 serves as a coordination point for ATP; sequence SLGKGI. Y54 lines the L-glutamine pocket. D71 is a binding site for ATP. The Mg(2+) site is built by D71 and E141. Residues 148 to 150, 188 to 193, and K224 each bind CTP; these read DIE and KTKPTQ. Residues 188-193 and K224 each bind UTP; that span reads KTKPTQ. One can recognise a Glutamine amidotransferase type-1 domain in the interval 292-534; it reads TIGIVGKYVS…IGASLKTNKL (243 aa). Position 354 (G354) interacts with L-glutamine. Residue C381 is the Nucleophile; for glutamine hydrolysis of the active site. L-glutamine is bound by residues 382 to 385, E405, and R462; that span reads LGMQ. Active-site residues include H507 and E509.

Belongs to the CTP synthase family. As to quaternary structure, homotetramer.

The catalysed reaction is UTP + L-glutamine + ATP + H2O = CTP + L-glutamate + ADP + phosphate + 2 H(+). It catalyses the reaction L-glutamine + H2O = L-glutamate + NH4(+). It carries out the reaction UTP + NH4(+) + ATP = CTP + ADP + phosphate + 2 H(+). It functions in the pathway pyrimidine metabolism; CTP biosynthesis via de novo pathway; CTP from UDP: step 2/2. Its activity is regulated as follows. Allosterically activated by GTP, when glutamine is the substrate; GTP has no effect on the reaction when ammonia is the substrate. The allosteric effector GTP functions by stabilizing the protein conformation that binds the tetrahedral intermediate(s) formed during glutamine hydrolysis. Inhibited by the product CTP, via allosteric rather than competitive inhibition. Catalyzes the ATP-dependent amination of UTP to CTP with either L-glutamine or ammonia as the source of nitrogen. Regulates intracellular CTP levels through interactions with the four ribonucleotide triphosphates. This chain is CTP synthase, found in Carboxydothermus hydrogenoformans (strain ATCC BAA-161 / DSM 6008 / Z-2901).